The following is a 311-amino-acid chain: HPr kinase/phosphorylase (311 aa).

Residues histidine 138 and lysine 159 contribute to the active site. Position 153–160 (153–160 (GDSGIGKS)) interacts with ATP. Serine 160 lines the Mg(2+) pocket. The active-site Proton acceptor; for phosphorylation activity. Proton donor; for dephosphorylation activity is aspartate 177. Residues 201-210 (LEIRGVGIIN) form an important for the catalytic mechanism of both phosphorylation and dephosphorylation region. Glutamate 202 contacts Mg(2+). Residue arginine 243 is part of the active site. The interval 264 to 269 (PVKTGR) is important for the catalytic mechanism of dephosphorylation.

Belongs to the HPrK/P family. In terms of assembly, homohexamer. It depends on Mg(2+) as a cofactor.

It catalyses the reaction [HPr protein]-L-serine + ATP = [HPr protein]-O-phospho-L-serine + ADP + H(+). It carries out the reaction [HPr protein]-O-phospho-L-serine + phosphate + H(+) = [HPr protein]-L-serine + diphosphate. Catalyzes the ATP- as well as the pyrophosphate-dependent phosphorylation of a specific serine residue in HPr, a phosphocarrier protein of the phosphoenolpyruvate-dependent sugar phosphotransferase system (PTS). HprK/P also catalyzes the pyrophosphate-producing, inorganic phosphate-dependent dephosphorylation (phosphorolysis) of seryl-phosphorylated HPr (P-Ser-HPr). The two antagonistic activities of HprK/P are regulated by several intracellular metabolites, which change their concentration in response to the absence or presence of rapidly metabolisable carbon sources (glucose, fructose, etc.) in the growth medium. Therefore, by controlling the phosphorylation state of HPr, HPrK/P is a sensor enzyme that plays a major role in the regulation of carbon metabolism and sugar transport: it mediates carbon catabolite repression (CCR), and regulates PTS-catalyzed carbohydrate uptake and inducer exclusion. The sequence is that of HPr kinase/phosphorylase (hprK) from Streptococcus mutans serotype c (strain ATCC 700610 / UA159).